Consider the following 648-residue polypeptide: Rho GTPase-activating protein 25 (648 aa).

Residues Arg-46 to Gly-151 form the PH domain. Positions Gln-160–Phe-354 constitute a Rho-GAP domain. The tract at residues Lys-356–Gln-559 is disordered. Ser-363, Ser-396, and Ser-403 each carry phosphoserine. Residues Arg-393–Thr-410 show a composition bias toward polar residues. The residue at position 407 (Thr-407) is a Phosphothreonine. Positions Gln-417 to Gly-431 are enriched in basic and acidic residues. Polar residues-rich tracts occupy residues Ser-453–Lys-462 and Asp-497–Asn-515. The residue at position 537 (Ser-537) is a Phosphoserine. A coiled-coil region spans residues Glu-540–Lys-641.

GTPase activator for the Rho-type GTPases by converting them to an inactive GDP-bound state. This chain is Rho GTPase-activating protein 25 (Arhgap25), found in Mus musculus (Mouse).